The chain runs to 1159 residues: ATP-dependent helicase/deoxyribonuclease subunit B (1159 aa).

This sequence belongs to the helicase family. AddB/RexB type 2 subfamily. As to quaternary structure, heterodimer of AddA and RexB. The cofactor is Mg(2+).

Functionally, the heterodimer acts as both an ATP-dependent DNA helicase and an ATP-dependent, dual-direction single-stranded exonuclease. Recognizes the chi site generating a DNA molecule suitable for the initiation of homologous recombination. This subunit has 5' -&gt; 3' nuclease activity but not helicase activity. The protein is ATP-dependent helicase/deoxyribonuclease subunit B of Leuconostoc mesenteroides subsp. mesenteroides (strain ATCC 8293 / DSM 20343 / BCRC 11652 / CCM 1803 / JCM 6124 / NCDO 523 / NBRC 100496 / NCIMB 8023 / NCTC 12954 / NRRL B-1118 / 37Y).